The chain runs to 339 residues: AT-hook motif nuclear-localized protein 26 (339 aa).

Positions 1 to 12 (MDPVQSHGSQSS) are enriched in polar residues. Disordered regions lie at residues 1–132 (MDPV…NKPK) and 273–339 (MQTP…RPPY). Low complexity predominate over residues 24–45 (LHLQQQQQHQQQHQQQQQQQFF). The span at 82–93 (NMDNIANTNSGS) shows a compositional bias: polar residues. A compositionally biased stretch (gly residues) spans 102-113 (GGEGGSGGGGSG). Positions 118 to 130 (RRPRGRPAGSKNK) form a DNA-binding region, a.T hook. The region spanning 142–279 (ANALRTHVME…EDEMQTPVQG (138 aa)) is the PPC domain. The segment covering 278-291 (QGGGGGGGGGGGMG) has biased composition (gly residues). Low complexity predominate over residues 292–310 (SPPMMGQQQAMAAMAAAQG).

It localises to the nucleus. Transcription factor that specifically binds AT-rich DNA sequences related to the nuclear matrix attachment regions (MARs). The polypeptide is AT-hook motif nuclear-localized protein 26 (Arabidopsis thaliana (Mouse-ear cress)).